Here is a 174-residue protein sequence, read N- to C-terminus: Secreted cysteine-rich protein UMAG_00792 (174 aa).

The signal sequence occupies residues 1–26 (MVSFKSSSLFLHSLSALLVLTTLSSA). N-linked (GlcNAc...) asparagine glycosylation occurs at N77.

As to quaternary structure, secreted cysteine-rich proteins (SCRPs) are predicted to form amyloids.

Its subcellular location is the secreted. In terms of biological role, secreted cysteine-rich protein that might form amyloid strutures which are involved in attachment to hydrophobic surfaces and in formation of hydrophobic aerial hyphae. This is Secreted cysteine-rich protein UMAG_00792 from Mycosarcoma maydis (Corn smut fungus).